An 868-amino-acid polypeptide reads, in one-letter code: MASLDNLVARYQRCFNDQSLKNSTIELEIRFQQINFLLFKTVYEALVAQEIPSTISHSIRCIKKVHHENHCREKILPSENFYFKKQPLMFFKFSEPASLGCKVSLAIEQPIRKFILDSSVLVRLKNRTTFRVSELWKIELTIVKQLMGSEVSAKLTAFKTLLFDTPEQQTTKNMMSLINPDDEYLYEIEIEYTGKPESLTAADVIKIKNTVLTLISPNHLMLTAYHQAIEFIASHILSSEILLARIKSGKWGLKRLLPQVKSMTKADYMKFYPPVGYYITDKADGIRGIAVIQDTQIYVVADQLYSLGTTGIEPLKPTILDGEFMPEKKEFYGFDVIMYEGNLLTQQGFETRIETLSKGIKVLQAFNIKAEMKPFISLTSADPNVLLKNFESIFKKKTRPYSIDGIILVEPGNSYLNTNTFKWKPTWDNTLDFLVRKCPESLNVPEYAPKKGFSLHLLFVGISGELFKKLALNWCPGYTKLFPVTQRNQNYFPVQFQPSDFPLAFLYYHPDTSSFSDIDGKVLEMRCLKREINHVSWEIVKIREDRQQDLKTGGYFGNDFKTAELTWLNYMDPFSFEELAKGPSGMYFAGAKTGIYRAQTALISFIKQEIIQKISHQSWVIDLGIGKGQDLGRYLDAGVRHLVGIDKDQTALAELVYRKFSHATTRQHKHATNIYVLHQDLAEPAKEISEKVHQIYGFPKEGASSIVSNLFIHYLMKNTQQVENLAVLCHKLLQPGGMVWFTTMLGERVLELLHENRIELNEVWEARENEVVKFAIKRLFKEDILQETGQEIGVLLPFSNGDFYNEYLVNTAFLIKIFKHHGFSLVQKQSFKDWIPEFQNFSKSLYKILTEADKTWTSLFGFICLRKN.

Residue Lys-282 is the N6-GMP-lysine intermediate of the active site. An mRNA cap 0 methyltransferase domain is found at 594–868 (GIYRAQTALI…LFGFICLRKN (275 aa)). Residues Lys-607, Gly-624, Asp-646, and 710-712 (LFI) contribute to the S-adenosyl-L-methionine site.

It in the N-terminal section; belongs to the dsDNA virus mRNA guanylyltransferase family. In the C-terminal section; belongs to the class I-like SAM-binding methyltransferase superfamily. mRNA cap 0 methyltransferase family. Part of the viral DNA-directed RNA polymerase that consists of 8 polII-like subunits (RPB1, RPB2, RPB3, RPB5, RPB6, RPB7, RPB9, RPB10), a capping enzyme and a termination factor.

Its subcellular location is the virion. The catalysed reaction is a 5'-end triphospho-ribonucleoside in mRNA + H2O = a 5'-end diphospho-ribonucleoside in mRNA + phosphate + H(+). It catalyses the reaction a 5'-end diphospho-ribonucleoside in mRNA + GTP + H(+) = a 5'-end (5'-triphosphoguanosine)-ribonucleoside in mRNA + diphosphate. It carries out the reaction a 5'-end (5'-triphosphoguanosine)-ribonucleoside in mRNA + S-adenosyl-L-methionine = a 5'-end (N(7)-methyl 5'-triphosphoguanosine)-ribonucleoside in mRNA + S-adenosyl-L-homocysteine. It participates in mRNA processing; mRNA capping. Probably catalyzes the second reaction in the mRNA cap formation pathway. Forms a covalent complex with GTP. This is mRNA-capping enzyme from African swine fever virus (isolate Tick/South Africa/Pretoriuskop Pr4/1996) (ASFV).